A 250-amino-acid chain; its full sequence is Probable transcriptional regulatory protein Nther_1800 (250 aa).

This sequence belongs to the TACO1 family.

The protein resides in the cytoplasm. The polypeptide is Probable transcriptional regulatory protein Nther_1800 (Natranaerobius thermophilus (strain ATCC BAA-1301 / DSM 18059 / JW/NM-WN-LF)).